The following is a 336-amino-acid chain: uncharacterized protein (336 aa).

The signal sequence occupies residues 1–21 (MSELVLITGITGFVASHSAEA). An NADP(+)-binding site is contributed by K38. Residue T153 is modified to Phosphothreonine. Y167 lines the NADP(+) pocket.

This sequence belongs to the NAD(P)-dependent epimerase/dehydratase family. Dihydroflavonol-4-reductase subfamily.

This is an uncharacterized protein from Schizosaccharomyces pombe (strain 972 / ATCC 24843) (Fission yeast).